We begin with the raw amino-acid sequence, 446 residues long: MTEKPVALIVLAAGQGSRMQSDLPKVLHRLGGVPLVGHALSTGRTLEPEAVVVVAGHGAEAVAKAVAKLNPEAKIALQEQQLGTGHAVSQALPQLEGFEGRVIVLYGDTPFIGQETLASLAAHPADVVVLGFEASDPGRYGRLVTGPEGLERIVEYKDADEATRAIRLVNSGVLAADAALLREFLPMIGNRNAAGEYYLTDIPELARAAGHRVEVVTCDEAETLGINTRAELAAAEAAFQVRARARALEDGVTMTDPATVWFALDTCIGRDAVIGQNVVFGPGVTVESGAEILPFCHLEGCHVSAGATVGPFARLRPGAELGGDVHVGNFVEIKNSVLDEGAKVGHLTYLGDAHVGEATNIGAGTVTCNYDGVSKHRTEIGAHAFIGSDTMLVAPVRVGARAMTGSGSVITEDVPDDALALGRAKQVVKPGLATRLMQALRQKKGN.

The interval 1-229 (MTEKPVALIV…EAETLGINTR (229 aa)) is pyrophosphorylase. UDP-N-acetyl-alpha-D-glucosamine-binding positions include 11–14 (LAAG), Lys25, Gln78, 83–84 (GT), 106–108 (YGD), Gly141, Glu155, Asn170, and Asn227. Residue Asp108 participates in Mg(2+) binding. Residue Asn227 participates in Mg(2+) binding. The segment at 230-250 (AELAAAEAAFQVRARARALED) is linker. Residues 251–446 (GVTMTDPATV…MQALRQKKGN (196 aa)) form an N-acetyltransferase region. Residues Arg316 and Lys334 each contribute to the UDP-N-acetyl-alpha-D-glucosamine site. His346 (proton acceptor) is an active-site residue. Residues Tyr349 and Asn360 each contribute to the UDP-N-acetyl-alpha-D-glucosamine site. Acetyl-CoA contacts are provided by residues Ala363, 369–370 (NY), Ser388, Ser406, and Arg423.

This sequence in the N-terminal section; belongs to the N-acetylglucosamine-1-phosphate uridyltransferase family. In the C-terminal section; belongs to the transferase hexapeptide repeat family. In terms of assembly, homotrimer. Mg(2+) is required as a cofactor.

It is found in the cytoplasm. It carries out the reaction alpha-D-glucosamine 1-phosphate + acetyl-CoA = N-acetyl-alpha-D-glucosamine 1-phosphate + CoA + H(+). It catalyses the reaction N-acetyl-alpha-D-glucosamine 1-phosphate + UTP + H(+) = UDP-N-acetyl-alpha-D-glucosamine + diphosphate. The protein operates within nucleotide-sugar biosynthesis; UDP-N-acetyl-alpha-D-glucosamine biosynthesis; N-acetyl-alpha-D-glucosamine 1-phosphate from alpha-D-glucosamine 6-phosphate (route II): step 2/2. It participates in nucleotide-sugar biosynthesis; UDP-N-acetyl-alpha-D-glucosamine biosynthesis; UDP-N-acetyl-alpha-D-glucosamine from N-acetyl-alpha-D-glucosamine 1-phosphate: step 1/1. Its pathway is bacterial outer membrane biogenesis; LPS lipid A biosynthesis. Functionally, catalyzes the last two sequential reactions in the de novo biosynthetic pathway for UDP-N-acetylglucosamine (UDP-GlcNAc). The C-terminal domain catalyzes the transfer of acetyl group from acetyl coenzyme A to glucosamine-1-phosphate (GlcN-1-P) to produce N-acetylglucosamine-1-phosphate (GlcNAc-1-P), which is converted into UDP-GlcNAc by the transfer of uridine 5-monophosphate (from uridine 5-triphosphate), a reaction catalyzed by the N-terminal domain. This chain is Bifunctional protein GlmU, found in Paracoccus denitrificans (strain Pd 1222).